Reading from the N-terminus, the 475-residue chain is Sulfate adenylyltransferase subunit 1 (475 aa).

One can recognise a tr-type G domain in the interval 25 to 240 (KSLLRFLTCG…VLETVEVINL (216 aa)). A G1 region spans residues 34–41 (GSVDDGKS). Residue 34–41 (GSVDDGKS) coordinates GTP. Positions 92-96 (GITID) are G2. The interval 113 to 116 (DTPG) is G3. GTP is bound by residues 113 to 117 (DTPGH) and 168 to 171 (NKMD). The segment at 168–171 (NKMD) is G4. The segment at 206–208 (SAL) is G5.

Belongs to the TRAFAC class translation factor GTPase superfamily. Classic translation factor GTPase family. CysN/NodQ subfamily. Heterodimer composed of CysD, the smaller subunit, and CysN.

It catalyses the reaction sulfate + ATP + H(+) = adenosine 5'-phosphosulfate + diphosphate. It participates in sulfur metabolism; hydrogen sulfide biosynthesis; sulfite from sulfate: step 1/3. Its function is as follows. With CysD forms the ATP sulfurylase (ATPS) that catalyzes the adenylation of sulfate producing adenosine 5'-phosphosulfate (APS) and diphosphate, the first enzymatic step in sulfur assimilation pathway. APS synthesis involves the formation of a high-energy phosphoric-sulfuric acid anhydride bond driven by GTP hydrolysis by CysN coupled to ATP hydrolysis by CysD. This Sodalis glossinidius (strain morsitans) protein is Sulfate adenylyltransferase subunit 1.